A 780-amino-acid chain; its full sequence is Aconitate hydratase, mitochondrial (780 aa).

Residues 1–27 (MAPYSLLVTRLQKALGVRQYHVASVLC) constitute a mitochondrion transit peptide. An N6-succinyllysine modification is found at Lys31. Lys50 carries the post-translational modification N6-acetyllysine; alternate. Lys50 carries the N6-succinyllysine; alternate modification. Gln99 provides a ligand contact to substrate. N6-acetyllysine; alternate is present on residues Lys138 and Lys144. Residues Lys138 and Lys144 each carry the N6-succinyllysine; alternate modification. 192–194 (DSH) lines the substrate pocket. Lys233 bears the N6-acetyllysine; alternate mark. Lys233 carries the post-translational modification N6-succinyllysine; alternate. Position 385 (Cys385) interacts with [4Fe-4S] cluster. Lys411 carries the post-translational modification N6-succinyllysine. Residues Cys448 and Cys451 each coordinate [4Fe-4S] cluster. Substrate is bound by residues Arg474 and Arg479. N6-acetyllysine; alternate occurs at positions 517 and 523. An N6-succinyllysine; alternate mark is found at Lys517 and Lys523. The segment covering 524-537 (LEAPDADELPRSDF) has biased composition (basic and acidic residues). The disordered stretch occupies residues 524–560 (LEAPDADELPRSDFDPGQDTYQHPPKDSSGQRVDVSP). An N6-succinyllysine modification is found at Lys549. Over residues 551–560 (SSGQRVDVSP) the composition is skewed to polar residues. Ser559 is modified (phosphoserine). Lys573 is subject to N6-acetyllysine; alternate. Lys573 carries the post-translational modification N6-succinyllysine; alternate. 2 positions are modified to N6-succinyllysine: Lys577 and Lys591. At Lys605 the chain carries N6-acetyllysine; alternate. Position 605 is an N6-succinyllysine; alternate (Lys605). Arg607 is a binding site for substrate. N6-succinyllysine is present on Lys628. The residue at position 670 (Ser670) is a Phosphoserine. 670-671 (SR) lines the substrate pocket. Lys689 bears the N6-succinyllysine mark. An N6-acetyllysine; alternate mark is found at Lys723 and Lys730. Residues Lys723 and Lys730 each carry the N6-succinyllysine; alternate modification. N6-acetyllysine occurs at positions 736, 739, and 743.

This sequence belongs to the aconitase/IPM isomerase family. Monomer. [4Fe-4S] cluster serves as cofactor. Post-translationally, forms covalent cross-links mediated by transglutaminase TGM2, between a glutamine and the epsilon-amino group of a lysine residue, forming homopolymers and heteropolymers.

It is found in the mitochondrion. It catalyses the reaction citrate = D-threo-isocitrate. Its pathway is carbohydrate metabolism; tricarboxylic acid cycle; isocitrate from oxaloacetate: step 2/2. In terms of biological role, catalyzes the isomerization of citrate to isocitrate via cis-aconitate. The chain is Aconitate hydratase, mitochondrial (Aco2) from Mus musculus (Mouse).